The following is a 705-amino-acid chain: 1,4-alpha-glucan branching enzyme GlgB (705 aa).

The active-site Nucleophile is the Asp-393. The active-site Proton donor is Glu-446.

This sequence belongs to the glycosyl hydrolase 13 family. GlgB subfamily. Monomer.

The enzyme catalyses Transfers a segment of a (1-&gt;4)-alpha-D-glucan chain to a primary hydroxy group in a similar glucan chain.. It functions in the pathway glycan biosynthesis; glycogen biosynthesis. Its function is as follows. Catalyzes the formation of the alpha-1,6-glucosidic linkages in glycogen by scission of a 1,4-alpha-linked oligosaccharide from growing alpha-1,4-glucan chains and the subsequent attachment of the oligosaccharide to the alpha-1,6 position. The chain is 1,4-alpha-glucan branching enzyme GlgB from Picrophilus torridus (strain ATCC 700027 / DSM 9790 / JCM 10055 / NBRC 100828 / KAW 2/3).